The chain runs to 130 residues: Small ribosomal subunit protein eS17 (130 aa).

Belongs to the eukaryotic ribosomal protein eS17 family.

The chain is Small ribosomal subunit protein eS17 (RPS17) from Theileria parva (East coast fever infection agent).